Consider the following 266-residue polypeptide: Phosphatidylglycerol--prolipoprotein diacylglyceryl transferase (266 aa).

A run of 7 helical transmembrane segments spans residues 19 to 39 (IWGP…FAFA), 61 to 81 (LMFW…TLFY), 91 to 111 (LYLF…LGVI), 125 to 145 (FLQV…FGRI), 176 to 196 (PSQL…ILWF), 204 to 224 (GAVS…VEFF), and 237 to 257 (GMSM…ILMV). Residue Arg144 coordinates a 1,2-diacyl-sn-glycero-3-phospho-(1'-sn-glycerol).

The protein belongs to the Lgt family.

It localises to the cell inner membrane. It carries out the reaction L-cysteinyl-[prolipoprotein] + a 1,2-diacyl-sn-glycero-3-phospho-(1'-sn-glycerol) = an S-1,2-diacyl-sn-glyceryl-L-cysteinyl-[prolipoprotein] + sn-glycerol 1-phosphate + H(+). It functions in the pathway protein modification; lipoprotein biosynthesis (diacylglyceryl transfer). Functionally, catalyzes the transfer of the diacylglyceryl group from phosphatidylglycerol to the sulfhydryl group of the N-terminal cysteine of a prolipoprotein, the first step in the formation of mature lipoproteins. The chain is Phosphatidylglycerol--prolipoprotein diacylglyceryl transferase from Idiomarina loihiensis (strain ATCC BAA-735 / DSM 15497 / L2-TR).